The sequence spans 123 residues: Small ribosomal subunit protein uS12 (123 aa).

The interval 1-29 (MPTINQLVRKGRVPQKAKSKVPAMEQNPQ) is disordered. The segment covering 9 to 19 (RKGRVPQKAKS) has biased composition (basic residues). 3-methylthioaspartic acid is present on aspartate 89.

The protein belongs to the universal ribosomal protein uS12 family. In terms of assembly, part of the 30S ribosomal subunit. Contacts proteins S8 and S17. May interact with IF1 in the 30S initiation complex.

Its function is as follows. With S4 and S5 plays an important role in translational accuracy. Interacts with and stabilizes bases of the 16S rRNA that are involved in tRNA selection in the A site and with the mRNA backbone. Located at the interface of the 30S and 50S subunits, it traverses the body of the 30S subunit contacting proteins on the other side and probably holding the rRNA structure together. The combined cluster of proteins S8, S12 and S17 appears to hold together the shoulder and platform of the 30S subunit. The chain is Small ribosomal subunit protein uS12 from Erythrobacter litoralis (strain HTCC2594).